The chain runs to 390 residues: Alanine racemase (390 aa).

Lys-46 serves as the catalytic Proton acceptor; specific for D-alanine. The residue at position 46 (Lys-46) is an N6-(pyridoxal phosphate)lysine. Arg-144 lines the substrate pocket. Tyr-275 acts as the Proton acceptor; specific for L-alanine in catalysis. Met-323 serves as a coordination point for substrate.

It belongs to the alanine racemase family. Pyridoxal 5'-phosphate serves as cofactor.

The enzyme catalyses L-alanine = D-alanine. Its pathway is amino-acid biosynthesis; D-alanine biosynthesis; D-alanine from L-alanine: step 1/1. Functionally, catalyzes the interconversion of L-alanine and D-alanine. May also act on other amino acids. This chain is Alanine racemase (alr), found in Mycolicibacterium vanbaalenii (strain DSM 7251 / JCM 13017 / BCRC 16820 / KCTC 9966 / NRRL B-24157 / PYR-1) (Mycobacterium vanbaalenii).